Reading from the N-terminus, the 340-residue chain is MVEQIKDKLGRPIRDLRLSVTDRCNFRCDYCMPKEVFGDDFVFLPKNELLTFDEMARIAKVYAELGVKKIRITGGEPLMRRDLDVLIAKLNQIDGIEDIGLTTNGLLLKKHGQELYDAGLRRINVSLDAIDDTLFQSINNRNIKATTILEQIDYATSIGLNVKVNVVIQKGINDDQIIPMLEYFKDKHIEIRFIEFMDVGNDNGWDFSKVVTKDEMLTMIEQHFEIDPVEPKYFGEVAKYYRHKDNGVQFGLITSVSQSFCSTCTRARLSSDGKFYGCLFATVDGFNVKAFIRSGVTDEELKEQFKALWQIRDDRYSDERTAQTVANRQRKKINMNYIGG.

Residues 8–227 (KLGRPIRDLR…TMIEQHFEID (220 aa)) form the Radical SAM core domain. Residue R17 participates in GTP binding. [4Fe-4S] cluster-binding residues include C24 and C28. Y30 is an S-adenosyl-L-methionine binding site. Position 31 (C31) interacts with [4Fe-4S] cluster. R71 serves as a coordination point for GTP. G75 provides a ligand contact to S-adenosyl-L-methionine. T102 is a GTP binding site. Residue S126 participates in S-adenosyl-L-methionine binding. GTP is bound at residue K163. S-adenosyl-L-methionine is bound at residue M197. Positions 261 and 264 each coordinate [4Fe-4S] cluster. 266–268 (RAR) contributes to the GTP binding site. C278 is a [4Fe-4S] cluster binding site.

It belongs to the radical SAM superfamily. MoaA family. As to quaternary structure, monomer and homodimer. [4Fe-4S] cluster serves as cofactor.

The catalysed reaction is GTP + AH2 + S-adenosyl-L-methionine = (8S)-3',8-cyclo-7,8-dihydroguanosine 5'-triphosphate + 5'-deoxyadenosine + L-methionine + A + H(+). It functions in the pathway cofactor biosynthesis; molybdopterin biosynthesis. Functionally, catalyzes the cyclization of GTP to (8S)-3',8-cyclo-7,8-dihydroguanosine 5'-triphosphate. The protein is GTP 3',8-cyclase of Staphylococcus aureus (strain Mu3 / ATCC 700698).